Consider the following 229-residue polypeptide: UPF0758 protein Fjoh_0413 (229 aa).

One can recognise an MPN domain in the interval 107 to 229 (KITSSKDAFT…YYSFVDEGIF (123 aa)). The Zn(2+) site is built by His178, His180, and Asp191. A JAMM motif motif is present at residues 178-191 (HNHPSGELNPSQAD).

Belongs to the UPF0758 family.

The polypeptide is UPF0758 protein Fjoh_0413 (Flavobacterium johnsoniae (strain ATCC 17061 / DSM 2064 / JCM 8514 / BCRC 14874 / CCUG 350202 / NBRC 14942 / NCIMB 11054 / UW101) (Cytophaga johnsonae)).